A 223-amino-acid chain; its full sequence is DNA mismatch repair protein MutH (223 aa).

This sequence belongs to the MutH family.

It is found in the cytoplasm. Sequence-specific endonuclease that cleaves unmethylated GATC sequences. It is involved in DNA mismatch repair. This Haemophilus influenzae (strain ATCC 51907 / DSM 11121 / KW20 / Rd) protein is DNA mismatch repair protein MutH.